The chain runs to 139 residues: Large ribosomal subunit protein uL22 (139 aa).

Residues 1-22 (MVSENEKTRRPKRSIQHRQNKD) form a disordered region. Basic residues predominate over residues 9 to 18 (RRPKRSIQHR).

This sequence belongs to the universal ribosomal protein uL22 family. Part of the 50S ribosomal subunit.

This protein binds specifically to 23S rRNA; its binding is stimulated by other ribosomal proteins, e.g. L4, L17, and L20. It is important during the early stages of 50S assembly. It makes multiple contacts with different domains of the 23S rRNA in the assembled 50S subunit and ribosome. In terms of biological role, the globular domain of the protein is located near the polypeptide exit tunnel on the outside of the subunit, while an extended beta-hairpin is found that lines the wall of the exit tunnel in the center of the 70S ribosome. The chain is Large ribosomal subunit protein uL22 from Pseudothermotoga lettingae (strain ATCC BAA-301 / DSM 14385 / NBRC 107922 / TMO) (Thermotoga lettingae).